Reading from the N-terminus, the 303-residue chain is Recombination-associated protein RdgC (303 aa).

Belongs to the RdgC family.

Its subcellular location is the cytoplasm. It is found in the nucleoid. Functionally, may be involved in recombination. The protein is Recombination-associated protein RdgC of Salmonella agona (strain SL483).